Here is a 343-residue protein sequence, read N- to C-terminus: Membrane progestin receptor delta (343 aa).

At Met1–Thr49 the chain is on the cytoplasmic side. Residues Val50–Gly70 traverse the membrane as a helical segment. Residues Ser71–Tyr79 lie on the Extracellular side of the membrane. The chain crosses the membrane as a helical span at residues His80–Ala100. Topologically, residues His101–His112 are cytoplasmic. A helical membrane pass occupies residues Ile113 to Tyr133. Over Ala134 to Arg146 the chain is Extracellular. The helical transmembrane segment at Leu147–Cys167 threads the bilayer. The Cytoplasmic segment spans residues Tyr168–Asp216. Residues Ala217–Ala237 form a helical membrane-spanning segment. At Ala238–Gln257 the chain is on the extracellular side. The chain crosses the membrane as a helical span at residues Leu258 to Met278. The Cytoplasmic portion of the chain corresponds to Gly279–Thr291. The helical transmembrane segment at Leu292–Ile312 threads the bilayer. Over Ala313 to Gln343 the chain is Extracellular.

This sequence belongs to the ADIPOR family. As to quaternary structure, homodimer.

The protein localises to the cell membrane. Plasma membrane progesterone (P4) receptor coupled to G proteins. Seems to act through a G(s) mediated pathway. Involved in neurosteroid inhibition of apoptosis. May be involved in regulating rapid P4 signaling in the nervous system. Also binds dehydroepiandrosterone (DHEA), pregnanolone, pregnenolone and allopregnanolone. The chain is Membrane progestin receptor delta from Mus musculus (Mouse).